The sequence spans 222 residues: CEACAM1-like protein UL7 (222 aa).

Asparagine 50, asparagine 56, asparagine 60, asparagine 71, asparagine 105, asparagine 109, asparagine 125, asparagine 132, asparagine 147, asparagine 164, asparagine 168, and asparagine 189 each carry an N-linked (GlcNAc...) asparagine; by host glycan. The chain crosses the membrane as a helical span at residues 193 to 213 (LALVGVIVFIALIVVCIMGWW).

This sequence belongs to the RL11 family. In terms of assembly, interacts with host FLT3. In terms of processing, highly glycosylated.

It is found in the secreted. Its subcellular location is the host cell membrane. Functionally, plays a role in modulating the host immune response and affecting host cytokine production. Structurally and functionally homolog of host CEACAM1, induces endothelial cell angiogenesis. Ligands for host FLT3 receptor, activates the PI3K/AKT and MAPK/ERK pathways. In turn, triggers hematopoietic progenitor cell and monocyte differentiation leading to virus reactivation. The protein is CEACAM1-like protein UL7 (UL7) of Human cytomegalovirus (strain AD169) (HHV-5).